The chain runs to 271 residues: Pyridoxine kinase (271 aa).

Asn-141 contacts ATP. Glu-144 provides a ligand contact to Mg(2+). Residues Thr-178–Lys-182, Asp-190, Ile-206, Gly-215, and Lys-240 each bind ATP.

Belongs to the ThiD family. As to quaternary structure, homodimer.

It carries out the reaction pyridoxal + ATP = pyridoxal 5'-phosphate + ADP + H(+). In terms of biological role, phosphorylates B6 vitamers; functions in a salvage pathway. Uses pyridoxal, pyridoxine, and pyridoxamine as substrates. Can also use hydroxymethylpyrimidine (HMP) as substrate. The sequence is that of Pyridoxine kinase (pdxK) from Bacillus subtilis (strain 168).